The sequence spans 250 residues: Eukaryotic translation initiation factor 3 subunit K (250 aa).

Residues 46-229 (FDCYANLALL…KENEARSEVK (184 aa)) form the PCI domain.

The protein belongs to the eIF-3 subunit K family. Component of the eukaryotic translation initiation factor 3 (eIF-3) complex.

It localises to the cytoplasm. In terms of biological role, component of the eukaryotic translation initiation factor 3 (eIF-3) complex, which is involved in protein synthesis of a specialized repertoire of mRNAs and, together with other initiation factors, stimulates binding of mRNA and methionyl-tRNAi to the 40S ribosome. The eIF-3 complex specifically targets and initiates translation of a subset of mRNAs involved in cell proliferation. The sequence is that of Eukaryotic translation initiation factor 3 subunit K from Emericella nidulans (strain FGSC A4 / ATCC 38163 / CBS 112.46 / NRRL 194 / M139) (Aspergillus nidulans).